The sequence spans 178 residues: Ribosome maturation factor RimP (178 aa).

It belongs to the RimP family.

Its subcellular location is the cytoplasm. Required for maturation of 30S ribosomal subunits. The protein is Ribosome maturation factor RimP of Streptococcus pyogenes serotype M4 (strain MGAS10750).